Reading from the N-terminus, the 158-residue chain is NADPH-dependent 7-cyano-7-deazaguanine reductase (158 aa).

The Thioimide intermediate role is filled by Cys56. Residue Asp63 is the Proton donor of the active site. Substrate contacts are provided by residues 78 to 80 and 97 to 98; these read LES and HE.

It belongs to the GTP cyclohydrolase I family. QueF type 1 subfamily.

It is found in the cytoplasm. It carries out the reaction 7-aminomethyl-7-carbaguanine + 2 NADP(+) = 7-cyano-7-deazaguanine + 2 NADPH + 3 H(+). The protein operates within tRNA modification; tRNA-queuosine biosynthesis. Its function is as follows. Catalyzes the NADPH-dependent reduction of 7-cyano-7-deazaguanine (preQ0) to 7-aminomethyl-7-deazaguanine (preQ1). The chain is NADPH-dependent 7-cyano-7-deazaguanine reductase from Nitrobacter hamburgensis (strain DSM 10229 / NCIMB 13809 / X14).